Consider the following 503-residue polypeptide: TGF-beta receptor type-1 (503 aa).

Positions 1–33 are cleaved as a signal peptide; it reads MEAAVAAPRPRLLLLVLAAAAAAAAALLPGATA. Residues 34–126 lie on the Extracellular side of the membrane; the sequence is LQCFCHLCTK…SSPGLGPVEL (93 aa). Cystine bridges form between C36/C54, C38/C41, C48/C71, C86/C100, and C101/C106. An N-linked (GlcNAc...) asparagine glycan is attached at N45. A helical transmembrane segment spans residues 127–147; it reads AAVIAGPVCFVCISLMLMVYI. Residues 148–503 lie on the Cytoplasmic side of the membrane; the sequence is CHNRTVIHHR…QLSQQEGIKM (356 aa). S165 carries the phosphoserine modification. The 30-residue stretch at 175 to 204 folds into the GS domain; the sequence is TTLKDLIYDMTTSGSGSGLPLLVQRTIART. T185 and T186 each carry phosphothreonine; by TGFBR2. Phosphoserine; by TGFBR2 occurs at positions 187, 189, and 191. Residues 193-194 carry the FKBP1A-binding motif; sequence LP. The region spanning 205–495 is the Protein kinase domain; it reads IVLQESIGKG…LRIKKTLSQL (291 aa). Residues 211–219 and K232 each bind ATP; that span reads IGKGRFGEV. A Glycyl lysine isopeptide (Lys-Gly) (interchain with G-Cter in ubiquitin) cross-link involves residue K268. The Proton acceptor role is filled by D333. K391 is covalently cross-linked (Glycyl lysine isopeptide (Lys-Gly) (interchain with G-Cter in SUMO)).

This sequence belongs to the protein kinase superfamily. TKL Ser/Thr protein kinase family. TGFB receptor subfamily. As to quaternary structure, homodimer; in the endoplasmic reticulum but also at the cell membrane. Heterohexamer; TGFB1, TGFB2 and TGFB3 homodimeric ligands assemble a functional receptor composed of two TGFBR1 and TGFBR2 heterodimers to form a ligand-receptor heterohexamer. The respective affinity of TGBRB1 and TGFBR2 for the ligands may modulate the kinetics of assembly of the receptor and may explain the different biological activities of TGFB1, TGFB2 and TGFB3. Component of a complex composed of TSC22D1 (via N-terminus), TGFBR1 and TGFBR2; the interaction between TSC22D1 and TGFBR1 is inhibited by SMAD7 and promoted by TGFB1. Interacts with CD109; inhibits TGF-beta receptor activation in keratinocytes. Interacts with RBPMS. Interacts (unphosphorylated) with FKBP1A; prevents TGFBR1 phosphorylation by TGFBR2 and stabilizes it in the inactive conformation. Interacts with SMAD2, SMAD3 and ZFYVE9; ZFYVE9 recruits SMAD2 and SMAD3 to the TGF-beta receptor. Interacts with TRAF6 and MAP3K7; induces MAP3K7 activation by TRAF6. Interacts with PARD6A; involved in TGF-beta induced epithelial to mesenchymal transition. Interacts with NEDD4L. Interacts with SMAD7, SMURF1 and SMURF2; SMAD7 recruits NEDD4L, SMURF1 and SMURF2 to the TGF-beta receptor. Interacts with USP15 and VPS39. Interacts with SDCBP (via C-terminus). Interacts with CAV1 and this interaction is impaired in the presence of SDCBP. Interacts with APPL1; interaction is TGF beta dependent; mediates trafficking of the TGFBR1 from the endosomes to the nucleus via microtubules in a TRAF6-dependent manner. Interacts with GPR50; this interaction promotes the constitutive activation of SMAD signaling pathway. Mg(2+) serves as cofactor. Mn(2+) is required as a cofactor. Post-translationally, phosphorylated at basal levels in the absence of ligand. Activated upon phosphorylation by TGFBR2, mainly in the GS domain. Phosphorylation in the GS domain abrogates FKBP1A-binding. In terms of processing, N-Glycosylated. Ubiquitinated; undergoes ubiquitination catalyzed by several E3 ubiquitin ligases including SMURF1, SMURF2 and NEDD4L2. Results in the proteasomal and/or lysosomal degradation of the receptor thereby negatively regulating its activity. Deubiquitinated by USP15, leading to stabilization of the protein and enhanced TGF-beta signal. Its ubiquitination and proteasome-mediated degradation is negatively regulated by SDCBP. Ubiquitinated by BFAR via'Lys-63'-linked ubiquitination at Lys-268, leading to TGF-beta signaling activation. As to expression, found in all tissues examined, most abundant in placenta and least abundant in brain and heart. Expressed in a variety of cancer cell lines.

The protein localises to the cell membrane. The protein resides in the cell junction. Its subcellular location is the tight junction. It is found in the cell surface. It localises to the membrane raft. It carries out the reaction L-threonyl-[receptor-protein] + ATP = O-phospho-L-threonyl-[receptor-protein] + ADP + H(+). It catalyses the reaction L-seryl-[receptor-protein] + ATP = O-phospho-L-seryl-[receptor-protein] + ADP + H(+). Kept in an inactive conformation by FKBP1A preventing receptor activation in absence of ligand. CD109 is another inhibitor of the receptor. In terms of biological role, transmembrane serine/threonine kinase forming with the TGF-beta type II serine/threonine kinase receptor, TGFBR2, the non-promiscuous receptor for the TGF-beta cytokines TGFB1, TGFB2 and TGFB3. Transduces the TGFB1, TGFB2 and TGFB3 signal from the cell surface to the cytoplasm and is thus regulating a plethora of physiological and pathological processes including cell cycle arrest in epithelial and hematopoietic cells, control of mesenchymal cell proliferation and differentiation, wound healing, extracellular matrix production, immunosuppression and carcinogenesis. The formation of the receptor complex composed of 2 TGFBR1 and 2 TGFBR2 molecules symmetrically bound to the cytokine dimer results in the phosphorylation and the activation of TGFBR1 by the constitutively active TGFBR2. Activated TGFBR1 phosphorylates SMAD2 which dissociates from the receptor and interacts with SMAD4. The SMAD2-SMAD4 complex is subsequently translocated to the nucleus where it modulates the transcription of the TGF-beta-regulated genes. This constitutes the canonical SMAD-dependent TGF-beta signaling cascade. Also involved in non-canonical, SMAD-independent TGF-beta signaling pathways. For instance, TGFBR1 induces TRAF6 autoubiquitination which in turn results in MAP3K7 ubiquitination and activation to trigger apoptosis. Also regulates epithelial to mesenchymal transition through a SMAD-independent signaling pathway through PARD6A phosphorylation and activation. The polypeptide is TGF-beta receptor type-1 (TGFBR1) (Homo sapiens (Human)).